Consider the following 101-residue polypeptide: Protein RnfH (101 aa).

This sequence belongs to the UPF0125 (RnfH) family.

The protein is Protein RnfH of Coxiella burnetii (strain CbuG_Q212) (Coxiella burnetii (strain Q212)).